The following is a 523-amino-acid chain: Cyclin-dependent kinase 17 (523 aa).

Residue Ser-9 is modified to Phosphoserine. The tract at residues 30–55 (TIEESSSKDNEPIVKNGRPPTSHSVH) is disordered. Phosphoserine occurs at positions 80, 92, and 105. The interval 103-123 (MGSDGESDQASGTSSDEVQSP) is disordered. Residues 110-123 (DQASGTSSDEVQSP) are compositionally biased toward polar residues. 4 positions are modified to phosphoserine: Ser-137, Ser-146, Ser-165, and Ser-180. Residues 192 to 473 (YIKLEKLGEG…AEEAMKHVYF (282 aa)) enclose the Protein kinase domain. Residues 198–206 (LGEGTYATV) and Lys-221 contribute to the ATP site. Asp-313 serves as the catalytic Proton acceptor. Positions 501-523 (PGFRNSSYPETGHGKNRRQSMLF) are disordered. Positions 514–523 (GKNRRQSMLF) are enriched in basic residues.

Belongs to the protein kinase superfamily. CMGC Ser/Thr protein kinase family. CDC2/CDKX subfamily. In terms of assembly, found in a complex containing CABLES1, CDK16 and TDRD7. Interacts with TDRD7.

It carries out the reaction L-seryl-[protein] + ATP = O-phospho-L-seryl-[protein] + ADP + H(+). The enzyme catalyses L-threonyl-[protein] + ATP = O-phospho-L-threonyl-[protein] + ADP + H(+). Functionally, may play a role in terminally differentiated neurons. Has a Ser/Thr-phosphorylating activity for histone H1. The polypeptide is Cyclin-dependent kinase 17 (Cdk17) (Mus musculus (Mouse)).